A 612-amino-acid chain; its full sequence is uncharacterized protein (612 aa).

Residues 213 to 238 (ASAEDGEEAAAGAGKRQVARSGARKR) form a disordered region. One can recognise a VWFA domain in the interval 421–610 (DLACLLLADL…ERLLQLYRRL (190 aa)).

It is found in the cytoplasm. In terms of biological role, component of the anaerobic respiratory chain that transforms nitrate to dinitrogen (denitrification). Function unknown, but essential for the denitrification process. This is an uncharacterized protein from Pseudomonas aeruginosa (strain ATCC 15692 / DSM 22644 / CIP 104116 / JCM 14847 / LMG 12228 / 1C / PRS 101 / PAO1).